The following is a 467-amino-acid chain: Dimethylamine methyltransferase MtbB1 (467 aa).

A non-standard amino acid (pyrrolysine) is located at residue Pyl356.

Belongs to the dimethylamine methyltransferase family.

The enzyme catalyses Co(I)-[dimethylamine-specific corrinoid protein] + dimethylamine + H(+) = methyl-Co(III)-[dimethylamine-specific corrinoid protein] + methylamine. It participates in one-carbon metabolism; methanogenesis from dimethylamine. In terms of biological role, catalyzes the transfer of a methyl group from dimethylamine to the corrinoid cofactor of MtbC. This is Dimethylamine methyltransferase MtbB1 (mtbB1) from Methanosarcina barkeri (strain Fusaro / DSM 804).